A 339-amino-acid chain; its full sequence is Flap endonuclease 1 (339 aa).

Positions 1–99 are N-domain; sequence MGVNLKEIVD…VAWEKRKKHK (99 aa). 7 residues coordinate Mg(2+): aspartate 29, aspartate 81, glutamate 153, glutamate 155, aspartate 174, aspartate 176, and aspartate 237. The interval 117–258 is I-domain; that stretch reads EAIKYAKSLG…TAIEIVKRFG (142 aa). Positions 329 to 337 are interaction with PCNA; sequence NQKTLFSFF.

The protein belongs to the XPG/RAD2 endonuclease family. FEN1 subfamily. Interacts with PCNA. PCNA stimulates the nuclease activity without altering cleavage specificity. Mg(2+) is required as a cofactor.

Functionally, structure-specific nuclease with 5'-flap endonuclease and 5'-3' exonuclease activities involved in DNA replication and repair. During DNA replication, cleaves the 5'-overhanging flap structure that is generated by displacement synthesis when DNA polymerase encounters the 5'-end of a downstream Okazaki fragment. Binds the unpaired 3'-DNA end and kinks the DNA to facilitate 5' cleavage specificity. Cleaves one nucleotide into the double-stranded DNA from the junction in flap DNA, leaving a nick for ligation. Also involved in the base excision repair (BER) pathway. Acts as a genome stabilization factor that prevents flaps from equilibrating into structures that lead to duplications and deletions. Also possesses 5'-3' exonuclease activity on nicked or gapped double-stranded DNA. In Nanoarchaeum equitans (strain Kin4-M), this protein is Flap endonuclease 1.